Reading from the N-terminus, the 906-residue chain is Pre-mRNA-splicing factor prp1 (906 aa).

Disordered regions lie at residues 50–129 (IEQR…VSSQ) and 142–164 (DEDWNNIPEPGDLTRKKRTKQPR). The span at 108–124 (REKQEQLQKEKYEKENP) shows a compositional bias: basic and acidic residues. The residue at position 235 (S235) is a Phosphoserine. HAT repeat units lie at residues 258–290 (GDIRKARKLLQSVIETNPKHASGWVAAARLEEV), 322–353 (HPAAEAKVIIANAVKKLPKSVTLWLEAEKLEN), 354–384 (QAQHKKRIIKKALEFNPTSVSLWKEAVNLEE), 385–416 (EVDNARILLARAVELIPMSIDLWLALARLETY), 524–556 (KCIDCARAVFAFSLRVYPKSEKLWLRAVELEKL), 558–590 (GTTESVCSILEKAVESCPKAEILWLLYAKERKN), 592–624 (NDIAGARNILGRAFEYNSNSEEIWLAAVRIEFV), 693–725 (EQIELARDAYLAGTKVCPYSIPLWLLLAKLEEK), 726–758 (QSVIRARVVFDRAKVKNPKNEFLWLELIKMELR), 760–792 (GNISQVRAALAKALQECPSSGLLWTEAIWLEPR), and 824–856 (KKADKARSWFLKAVKADQDNGDVWCWFYKYSLE).

Interacts with brr2 and spp42.

It localises to the nucleus. Its function is as follows. Involved in pre-mRNA splicing. Interacts with prp6 and prp13. May also be involved in the regulation of the G0-G1/G2 transition. Required for pre-spliceosome formation, which is the first step of pre-mRNA splicing. This protein is associated with snRNP U5. Has a role in branch site-3' splice site selection. Associates with the branch site-3' splice 3'-exon region. The protein is Pre-mRNA-splicing factor prp1 (prp1) of Schizosaccharomyces pombe (strain 972 / ATCC 24843) (Fission yeast).